A 298-amino-acid polypeptide reads, in one-letter code: GTP cyclohydrolase FolE2 (298 aa).

This sequence belongs to the GTP cyclohydrolase IV family.

The enzyme catalyses GTP + H2O = 7,8-dihydroneopterin 3'-triphosphate + formate + H(+). Its pathway is cofactor biosynthesis; 7,8-dihydroneopterin triphosphate biosynthesis; 7,8-dihydroneopterin triphosphate from GTP: step 1/1. Converts GTP to 7,8-dihydroneopterin triphosphate. This is GTP cyclohydrolase FolE2 from Xylella fastidiosa (strain M12).